A 232-amino-acid chain; its full sequence is Large ribosomal subunit protein uL1 (232 aa).

This sequence belongs to the universal ribosomal protein uL1 family. Part of the 50S ribosomal subunit.

Its function is as follows. Binds directly to 23S rRNA. The L1 stalk is quite mobile in the ribosome, and is involved in E site tRNA release. Protein L1 is also a translational repressor protein, it controls the translation of the L11 operon by binding to its mRNA. This Levilactobacillus brevis (strain ATCC 367 / BCRC 12310 / CIP 105137 / JCM 1170 / LMG 11437 / NCIMB 947 / NCTC 947) (Lactobacillus brevis) protein is Large ribosomal subunit protein uL1.